We begin with the raw amino-acid sequence, 154 residues long: MSNKFVITWDAMQTYCRQLAEKQMPADQWKGIWAVSRGGLVPGAILARELGIRYVDTICISSYDHDHQRDMTVLKAPEGDGEGYLIVEDLVDSGDTARKLREMYPKAKLIAVCAKPSGKELLDDYVVDIAQDTWIEQPWDMALAYAEPVNRKQK.

5-phospho-alpha-D-ribose 1-diphosphate is bound by residues 37-38 (RG), Arg69, and 88-96 (EDLVDSGDT). Arg69 provides a ligand contact to GMP. Residue Asp89 participates in Mg(2+) binding. Residues Asp92 and Ile135 each coordinate guanine. Xanthine is bound by residues Asp92 and Ile135. GMP is bound by residues 92 to 96 (DSGDT) and 134 to 135 (WI).

Belongs to the purine/pyrimidine phosphoribosyltransferase family. XGPT subfamily. As to quaternary structure, homotetramer. Mg(2+) is required as a cofactor.

The protein localises to the cell inner membrane. It catalyses the reaction GMP + diphosphate = guanine + 5-phospho-alpha-D-ribose 1-diphosphate. The enzyme catalyses XMP + diphosphate = xanthine + 5-phospho-alpha-D-ribose 1-diphosphate. The catalysed reaction is IMP + diphosphate = hypoxanthine + 5-phospho-alpha-D-ribose 1-diphosphate. It participates in purine metabolism; GMP biosynthesis via salvage pathway; GMP from guanine: step 1/1. Its pathway is purine metabolism; XMP biosynthesis via salvage pathway; XMP from xanthine: step 1/1. Its function is as follows. Purine salvage pathway enzyme that catalyzes the transfer of the ribosyl-5-phosphate group from 5-phospho-alpha-D-ribose 1-diphosphate (PRPP) to the N9 position of the 6-oxopurines guanine and xanthine to form the corresponding ribonucleotides GMP (guanosine 5'-monophosphate) and XMP (xanthosine 5'-monophosphate), with the release of PPi. To a lesser extent, also acts on hypoxanthine. This Vibrio vulnificus (strain CMCP6) protein is Xanthine-guanine phosphoribosyltransferase.